Consider the following 399-residue polypeptide: Subtilisin-like protease 1 (399 aa).

The N-terminal stretch at 1 to 19 (MGVFRFISISLAAVSAANA) is a signal peptide. The propeptide occupies 20 to 116 (AQILSMPHAQ…VEPDTIISVH (97 aa)). The region spanning 34-115 (SYIVMMKDDT…FVEPDTIISV (82 aa)) is the Inhibitor I9 domain. Residues 126-399 (SWGLARISNP…TNVLINNGGA (274 aa)) form the Peptidase S8 domain. Residues aspartate 158 and histidine 190 each act as charge relay system in the active site. A disordered region spans residues 175–198 (GSNQVNDGDDRDGSGHGTHTSGTM). The N-linked (GlcNAc...) asparagine glycan is linked to asparagine 251. Residues 282–294 (NDNQDAQSSSPAS) are compositionally biased toward polar residues. The segment at 282-312 (NDNQDAQSSSPASEPSVCTVGSSAEDDSRSS) is disordered. The active-site Charge relay system is serine 345.

The protein belongs to the peptidase S8 family.

Its subcellular location is the secreted. Functionally, secreted subtilisin-like serine protease with keratinolytic activity that contributes to pathogenicity. In Arthroderma benhamiae (Trichophyton mentagrophytes), this protein is Subtilisin-like protease 1 (SUB1).